We begin with the raw amino-acid sequence, 343 residues long: CRISPR-associated endonuclease Cas1 1 (343 aa).

3 residues coordinate Mn(2+): Glu166, His234, and Glu249.

Belongs to the CRISPR-associated endonuclease Cas1 family. As to quaternary structure, homodimer, forms a heterotetramer with a Cas2 homodimer. It depends on Mg(2+) as a cofactor. The cofactor is Mn(2+).

Functionally, CRISPR (clustered regularly interspaced short palindromic repeat), is an adaptive immune system that provides protection against mobile genetic elements (viruses, transposable elements and conjugative plasmids). CRISPR clusters contain spacers, sequences complementary to antecedent mobile elements, and target invading nucleic acids. CRISPR clusters are transcribed and processed into CRISPR RNA (crRNA). Acts as a dsDNA endonuclease. Involved in the integration of spacer DNA into the CRISPR cassette. This is CRISPR-associated endonuclease Cas1 1 from Chlorobaculum tepidum (strain ATCC 49652 / DSM 12025 / NBRC 103806 / TLS) (Chlorobium tepidum).